Here is a 407-residue protein sequence, read N- to C-terminus: Putative glucose/galactose transporter (407 aa).

Transmembrane regions (helical) follow at residues 11-31 (GSLTALFFLMGFITVLNDILI), 47-67 (LIQFCFFGAYFIMGGVFGNVI), 70-90 (IGYPFGVVLGFVITASGCALF), 96-116 (FGSYGFFLGALFILASGIVCL), 139-159 (VQAFNSLGTTLGPIFGSLLIF), 180-200 (VQMPYLGLAVFSLLLALVMYL), 225-245 (FVFGALGIFFYVGGEVAIGSF), 263-283 (HYLVYYWGGAMVGRFLGSALM), 300-320 (IILIALAILIGGKIALFALTF), 321-341 (VGFFNSIMFPTIFSLATLNLG), 349-369 (GVISMAIVGGALIPPIQGVVT), and 378-398 (NLLYAYSVPLLCYFYILFFAL).

This sequence belongs to the major facilitator superfamily. FHS transporter (TC 2.A.1.7) family.

The protein localises to the cell inner membrane. In terms of biological role, intake of glucose and galactose. This chain is Putative glucose/galactose transporter (gluP), found in Helicobacter pylori (strain J99 / ATCC 700824) (Campylobacter pylori J99).